A 414-amino-acid chain; its full sequence is Tyrosine--tRNA ligase (414 aa).

Residue Y35 participates in L-tyrosine binding. The short motif at 40-49 (PTADSLHVGH) is the 'HIGH' region element. L-tyrosine is bound by residues Y164 and Q168. A 'KMSKS' region motif is present at residues 226–230 (KFGKT). K229 contributes to the ATP binding site. Residues 347–414 (TKVIDALIEV…KKKYFVILIK (68 aa)) form the S4 RNA-binding domain.

This sequence belongs to the class-I aminoacyl-tRNA synthetase family. TyrS type 1 subfamily. As to quaternary structure, homodimer.

The protein localises to the cytoplasm. The catalysed reaction is tRNA(Tyr) + L-tyrosine + ATP = L-tyrosyl-tRNA(Tyr) + AMP + diphosphate + H(+). Functionally, catalyzes the attachment of tyrosine to tRNA(Tyr) in a two-step reaction: tyrosine is first activated by ATP to form Tyr-AMP and then transferred to the acceptor end of tRNA(Tyr). This Mycoplasma mycoides subsp. mycoides SC (strain CCUG 32753 / NCTC 10114 / PG1) protein is Tyrosine--tRNA ligase.